The sequence spans 561 residues: uncharacterized protein (561 aa).

Over residues 1–11 (MSQVSLPSQLK) the composition is skewed to polar residues. Disordered stretches follow at residues 1–22 (MSQV…SRCR) and 522–561 (CSLP…IMLP). Low complexity predominate over residues 541–561 (QQPQQAQAEQAQQPQQQIMLP).

It to Synechocystis PCC 6803 sll0335 and to M.tuberculosis Rv2567.

This is an uncharacterized protein from Mycobacterium leprae (strain TN).